The primary structure comprises 166 residues: Small ribosomal subunit protein uS5 (166 aa).

The S5 DRBM domain occupies 12–75 (YIEKLVQVNR…EAARRNMIQV (64 aa)).

It belongs to the universal ribosomal protein uS5 family. As to quaternary structure, part of the 30S ribosomal subunit. Contacts proteins S4 and S8.

Its function is as follows. With S4 and S12 plays an important role in translational accuracy. Functionally, located at the back of the 30S subunit body where it stabilizes the conformation of the head with respect to the body. The sequence is that of Small ribosomal subunit protein uS5 from Pseudomonas syringae pv. tomato (strain ATCC BAA-871 / DC3000).